The sequence spans 747 residues: Ubiquitin carboxyl-terminal hydrolase 13 (747 aa).

The USP domain occupies 140 to 668 (FGYENFGNTC…TAYVLFYKAM (529 aa)). Cysteine 149 acts as the Nucleophile in catalysis. Disordered regions lie at residues 172 to 305 (PKKS…RPPD) and 318 to 367 (YENP…RKKS). Positions 174–183 (KSRESDQPRK) are enriched in basic and acidic residues. A Phosphoserine modification is found at serine 198. A compositionally biased stretch (polar residues) spans 225 to 235 (PVNSVNSNTAG). The segment covering 251–260 (HVQDNNKKEG) has biased composition (basic and acidic residues). Residues 319-343 (ENPSRGSSNSNNLDLKGESNSSLST) are compositionally biased toward polar residues. Histidine 619 acts as the Proton acceptor in catalysis.

This sequence belongs to the peptidase C19 family.

The enzyme catalyses Thiol-dependent hydrolysis of ester, thioester, amide, peptide and isopeptide bonds formed by the C-terminal Gly of ubiquitin (a 76-residue protein attached to proteins as an intracellular targeting signal).. In Saccharomyces cerevisiae (strain ATCC 204508 / S288c) (Baker's yeast), this protein is Ubiquitin carboxyl-terminal hydrolase 13 (UBP13).